We begin with the raw amino-acid sequence, 302 residues long: Protein FdhE homolog (302 aa).

It belongs to the FdhE family.

Its subcellular location is the cytoplasm. Necessary for formate dehydrogenase activity. The protein is Protein FdhE homolog of Haemophilus influenzae (strain PittGG).